The chain runs to 456 residues: Adenylosuccinate lyase (456 aa).

N(6)-(1,2-dicarboxyethyl)-AMP-binding positions include 15–16 and 90–92; these read RY and NHD. Residue K94 is modified to N6-acetyllysine. 122–123 contacts N(6)-(1,2-dicarboxyethyl)-AMP; sequence TS. Residue H171 is the Proton donor/acceptor of the active site. Q247 contributes to the N(6)-(1,2-dicarboxyethyl)-AMP binding site. S295 serves as the catalytic Proton donor/acceptor. N(6)-(1,2-dicarboxyethyl)-AMP is bound by residues S296, 301–303, N309, R335, and 340–344; these read KVN and STVLR. K366 bears the N6-acetyllysine mark.

The protein belongs to the lyase 1 family. Adenylosuccinate lyase subfamily. Homotetramer. Residues from neighboring subunits contribute catalytic and substrate-binding residues to each active site.

The enzyme catalyses N(6)-(1,2-dicarboxyethyl)-AMP = fumarate + AMP. It carries out the reaction (2S)-2-[5-amino-1-(5-phospho-beta-D-ribosyl)imidazole-4-carboxamido]succinate = 5-amino-1-(5-phospho-beta-D-ribosyl)imidazole-4-carboxamide + fumarate. It participates in purine metabolism; AMP biosynthesis via de novo pathway; AMP from IMP: step 2/2. The protein operates within purine metabolism; IMP biosynthesis via de novo pathway; 5-amino-1-(5-phospho-D-ribosyl)imidazole-4-carboxamide from 5-amino-1-(5-phospho-D-ribosyl)imidazole-4-carboxylate: step 2/2. Functionally, catalyzes two reactions in de novo purine nucleotide biosynthesis. Catalyzes the breakdown of 5-aminoimidazole- (N-succinylocarboxamide) ribotide (SAICAR or 2-[5-amino-1-(5-phospho-beta-D-ribosyl)imidazole-4-carboxamido]succinate) to 5-aminoimidazole-4-carboxamide ribotide (AICAR or 5-amino-1-(5-phospho-beta-D-ribosyl)imidazole-4-carboxamide) and fumarate, and of adenylosuccinate (ADS or N(6)-(1,2-dicarboxyethyl)-AMP) to adenosine monophosphate (AMP) and fumarate. The polypeptide is Adenylosuccinate lyase (purB) (Escherichia coli O6:H1 (strain CFT073 / ATCC 700928 / UPEC)).